The chain runs to 377 residues: Dihydroorotate dehydrogenase (quinone) (377 aa).

Residues 68–72 (AGFDK) and Thr92 each bind FMN. Residue Lys72 participates in substrate binding. 117–121 (NRMGF) is a substrate binding site. Positions 149 and 182 each coordinate FMN. Asn182 provides a ligand contact to substrate. Ser185 serves as the catalytic Nucleophile. Asn187 lines the substrate pocket. FMN contacts are provided by Lys224 and Thr252. 253–254 (NT) provides a ligand contact to substrate. Residues Gly278, Gly307, and 328-329 (YT) contribute to the FMN site.

This sequence belongs to the dihydroorotate dehydrogenase family. Type 2 subfamily. As to quaternary structure, monomer. The cofactor is FMN.

The protein resides in the cell membrane. The enzyme catalyses (S)-dihydroorotate + a quinone = orotate + a quinol. It functions in the pathway pyrimidine metabolism; UMP biosynthesis via de novo pathway; orotate from (S)-dihydroorotate (quinone route): step 1/1. Its function is as follows. Catalyzes the conversion of dihydroorotate to orotate with quinone as electron acceptor. This is Dihydroorotate dehydrogenase (quinone) from Thermobifida fusca (strain YX).